The chain runs to 597 residues: Elongation factor 4 (597 aa).

One can recognise a tr-type G domain in the interval Lys2–Glu184. Residues Asp14–Thr19 and Asn131–Asp134 contribute to the GTP site.

It belongs to the TRAFAC class translation factor GTPase superfamily. Classic translation factor GTPase family. LepA subfamily.

It localises to the cell inner membrane. It carries out the reaction GTP + H2O = GDP + phosphate + H(+). In terms of biological role, required for accurate and efficient protein synthesis under certain stress conditions. May act as a fidelity factor of the translation reaction, by catalyzing a one-codon backward translocation of tRNAs on improperly translocated ribosomes. Back-translocation proceeds from a post-translocation (POST) complex to a pre-translocation (PRE) complex, thus giving elongation factor G a second chance to translocate the tRNAs correctly. Binds to ribosomes in a GTP-dependent manner. The polypeptide is Elongation factor 4 (Aliivibrio fischeri (strain ATCC 700601 / ES114) (Vibrio fischeri)).